The primary structure comprises 1381 residues: Contactin-associated protein 1 (1381 aa).

A signal peptide spans 1-20 (MMSLRLFSILLAAVVSGAQG). Topologically, residues 21 to 1284 (WGYYGCNEEL…PYYHDDGWIA (1264 aa)) are extracellular. One can recognise an F5/8 type C domain in the interval 26-169 (CNEELVGPLY…IGLRLGIYGC (144 aa)). The cysteines at positions 26 and 169 are disulfide-linked. Asparagine 121, asparagine 129, and asparagine 277 each carry an N-linked (GlcNAc...) asparagine glycan. Laminin G-like domains lie at 204 to 356 (FKTE…AFRC) and 390 to 539 (FRTW…FDTC). A disulfide bond links cysteine 324 and cysteine 356. Asparagine 421, asparagine 500, and asparagine 519 each carry an N-linked (GlcNAc...) asparagine glycan. Disulfide bonds link cysteine 507-cysteine 539, cysteine 545-cysteine 556, cysteine 550-cysteine 565, and cysteine 567-cysteine 577. Positions 544 to 576 (RCSPNMCEHDGRCYQSWDDFICYCELTGYKGVT) constitute an EGF-like 1 domain. The 220-residue stretch at 577–796 (CHEPLYKESC…NTISFRTGAA (220 aa)) folds into the Fibrinogen C-terminal domain. N-linked (GlcNAc...) asparagine glycans are attached at residues asparagine 598, asparagine 654, asparagine 665, asparagine 764, asparagine 805, asparagine 844, asparagine 861, asparagine 949, and asparagine 957. The region spanning 814-958 (FRTSAPSGVF…NASEGTFPNC (145 aa)) is the Laminin G-like 3 domain. Intrachain disulfides connect cysteine 931-cysteine 958, cysteine 962-cysteine 975, cysteine 969-cysteine 984, and cysteine 986-cysteine 996. The EGF-like 2 domain maps to 962–996 (CTHPRFPCFHGGRCVERYSYYTCDCDLTAFDGPYC). Asparagine 1079 and asparagine 1148 each carry an N-linked (GlcNAc...) asparagine glycan. The Laminin G-like 4 domain maps to 1089–1251 (FSTSSAPAVL…VQGELSESNC (163 aa)). A disulfide bridge connects residues cysteine 1210 and cysteine 1251. Residues 1285-1305 (ILLGFLVAFLLLGLVGMLVLF) form a helical membrane-spanning segment. The Cytoplasmic portion of the chain corresponds to 1306-1381 (YLQNHRYKGS…PQILEESRSE (76 aa)). Positions 1317–1381 (HTNEPKATHD…PQILEESRSE (65 aa)) are disordered. The span at 1319–1329 (NEPKATHDSHP) shows a compositional bias: basic and acidic residues. An SH3-binding motif is present at residues 1329-1366 (PGGKAPLPPSGPAQAPAPTPAPTQVPTPAPAPASGPGP). Over residues 1334–1363 (PLPPSGPAQAPAPTPAPTQVPTPAPAPASG) the composition is skewed to pro residues. The residue at position 1380 (serine 1380) is a Phosphoserine.

The protein belongs to the neurexin family. As to quaternary structure, interacts with CNTN1/contactin in cis form. As to expression, predominantly expressed in brain. In myelinated nerve fibers of the CNS predominantly found in paranodal axoglial junctions. In unmyelinated nerve fibers of the CNS diffusely distributed along the entire surface. Weak expression is detected in ovary, pancreas, colon, lung, heart, intestine and testis.

The protein resides in the membrane. The protein localises to the cell junction. Its subcellular location is the paranodal septate junction. Its function is as follows. Required, with CNTNAP2, for radial and longitudinal organization of myelinated axons. Plays a role in the formation of functional distinct domains critical for saltatory conduction of nerve impulses in myelinated nerve fibers. Demarcates the paranodal region of the axo-glial junction. In association with contactin involved in the signaling between axons and myelinating glial cells. The chain is Contactin-associated protein 1 (Cntnap1) from Rattus norvegicus (Rat).